The sequence spans 365 residues: 1-deoxy-D-xylulose 5-phosphate reductoisomerase (365 aa).

Thr7, Gly8, Ser9, Ile10, Ala31, Lys32, Asn33, and Asn114 together coordinate NADPH. Lys115 is a binding site for 1-deoxy-D-xylulose 5-phosphate. Glu116 provides a ligand contact to NADPH. Asp134 lines the Mn(2+) pocket. The 1-deoxy-D-xylulose 5-phosphate site is built by Ser135, Glu136, Ser158, and His181. Glu136 contacts Mn(2+). Gly187 provides a ligand contact to NADPH. 1-deoxy-D-xylulose 5-phosphate is bound by residues Ser194, Asn199, Lys200, and Glu203. Glu203 contributes to the Mn(2+) binding site.

This sequence belongs to the DXR family. Mg(2+) serves as cofactor. Mn(2+) is required as a cofactor.

The catalysed reaction is 2-C-methyl-D-erythritol 4-phosphate + NADP(+) = 1-deoxy-D-xylulose 5-phosphate + NADPH + H(+). It participates in isoprenoid biosynthesis; isopentenyl diphosphate biosynthesis via DXP pathway; isopentenyl diphosphate from 1-deoxy-D-xylulose 5-phosphate: step 1/6. In terms of biological role, catalyzes the NADPH-dependent rearrangement and reduction of 1-deoxy-D-xylulose-5-phosphate (DXP) to 2-C-methyl-D-erythritol 4-phosphate (MEP). The sequence is that of 1-deoxy-D-xylulose 5-phosphate reductoisomerase from Campylobacter curvus (strain 525.92).